The sequence spans 351 residues: High-affinity nickel transport protein (351 aa).

The Cytoplasmic segment spans residues 1-19 (MFQLLAGVRMNSTGRPRAK). The chain crosses the membrane as a helical span at residues 20–40 (IILLYALLIAFNIGAWLCALA). Residues 41 to 51 (AFRDHPVLLGT) lie on the Periplasmic side of the membrane. Residues 52-72 (ALLAYGLGLRHAVDADHLAAI) traverse the membrane as a helical segment. The Cytoplasmic portion of the chain corresponds to 73–94 (DNVTRKLMQDGRRPITAGLWFS). Residues 95 to 115 (LGHSSVVVLASVLIAVMATTL) traverse the membrane as a helical segment. The Periplasmic segment spans residues 116–128 (QERLDAFHEVGSV). A helical transmembrane segment spans residues 129–149 (IGTLASALFLFAIAAINLVIL). Topologically, residues 150 to 199 (RSAYRAFRRVRRGGIYVEEDFDLLFGNRGFLARIFRPLFRFITRSWHMYP) are cytoplasmic. The helical transmembrane segment at 200–220 (LGMLFALGFDTATEVALLGIS) threads the bilayer. The Periplasmic segment spans residues 221–243 (TMEASRGVPIWSILVFPALFTAG). The chain crosses the membrane as a helical span at residues 244-264 (MALIDTIDSILMCGAYAWAYA). Residues 265-269 (KPVRK) lie on the Cytoplasmic side of the membrane. The chain crosses the membrane as a helical span at residues 270–290 (LYYNMTITFVSAIVALIVGGI). The Periplasmic portion of the chain corresponds to 291-316 (ETLGLLADKFMLKGVFWNAVGALNEN). A helical membrane pass occupies residues 317–337 (FCQLGFVIIGIFTVCWVVSIV). At 338-351 (VYRLRRYDDSEVRA) the chain is on the cytoplasmic side.

It belongs to the NiCoT transporter (TC 2.A.52) family.

It localises to the cell inner membrane. Functionally, high-affinity nickel transporter responsible for nickel uptake. Necessary for high levels of activity of hydrogenase and urease. Does not transport cobalt. In Cupriavidus necator (strain ATCC 17699 / DSM 428 / KCTC 22496 / NCIMB 10442 / H16 / Stanier 337) (Ralstonia eutropha), this protein is High-affinity nickel transport protein (hoxN).